We begin with the raw amino-acid sequence, 85 residues long: Large ribosomal subunit protein bL27 (85 aa).

The disordered stretch occupies residues 1–23; the sequence is MAHKKGQGSTQNNRDSAGRRLGV.

This sequence belongs to the bacterial ribosomal protein bL27 family.

The polypeptide is Large ribosomal subunit protein bL27 (Aliarcobacter butzleri (strain RM4018) (Arcobacter butzleri)).